Here is a 146-residue protein sequence, read N- to C-terminus: 3-dehydroquinate dehydratase (146 aa).

Residue Tyr23 is the Proton acceptor of the active site. Substrate-binding residues include Asn74, His80, and Asp87. His100 (proton donor) is an active-site residue. Substrate is bound by residues 101–102 (IS) and Arg111.

It belongs to the type-II 3-dehydroquinase family. As to quaternary structure, homododecamer.

The catalysed reaction is 3-dehydroquinate = 3-dehydroshikimate + H2O. It participates in metabolic intermediate biosynthesis; chorismate biosynthesis; chorismate from D-erythrose 4-phosphate and phosphoenolpyruvate: step 3/7. Its function is as follows. Catalyzes a trans-dehydration via an enolate intermediate. This is 3-dehydroquinate dehydratase from Bacillus cereus (strain ATCC 10987 / NRS 248).